We begin with the raw amino-acid sequence, 596 residues long: uncharacterized protein (596 aa).

Basic residues-rich tracts occupy residues 1-10 (MRLRSQKRGN) and 18-29 (KTRKGKGKKLKP). The interval 1 to 30 (MRLRSQKRGNKFVALPAKTRKGKGKKLKPK) is disordered.

This is an uncharacterized protein from Magallana gigas (Pacific oyster).